Reading from the N-terminus, the 140-residue chain is Large-conductance mechanosensitive channel 2 (140 aa).

3 helical membrane passes run 8-28 (FISK…AAFG), 30-50 (IVDS…FGGL), and 81-101 (GSFI…FLMV).

The protein belongs to the MscL family. Homopentamer.

It is found in the cell inner membrane. In terms of biological role, channel that opens in response to stretch forces in the membrane lipid bilayer. May participate in the regulation of osmotic pressure changes within the cell. The chain is Large-conductance mechanosensitive channel 2 from Mesorhizobium japonicum (strain LMG 29417 / CECT 9101 / MAFF 303099) (Mesorhizobium loti (strain MAFF 303099)).